The chain runs to 215 residues: Cytochrome b6 (215 aa).

A helical membrane pass occupies residues 32–52 (IFYCLGGITLTCFLVQVATGF). Cys-35 serves as a coordination point for heme c. Heme b contacts are provided by His-86 and His-100. 3 helical membrane-spanning segments follow: residues 90-110 (ASMM…TGGF), 116-136 (LTWV…VTGY), and 186-206 (LHTF…FPMI). 2 residues coordinate heme b: His-187 and His-202.

It belongs to the cytochrome b family. PetB subfamily. In terms of assembly, the 4 large subunits of the cytochrome b6-f complex are cytochrome b6, subunit IV (17 kDa polypeptide, PetD), cytochrome f and the Rieske protein, while the 4 small subunits are PetG, PetL, PetM and PetN. The complex functions as a dimer. Requires heme b as cofactor. It depends on heme c as a cofactor.

The protein localises to the plastid. The protein resides in the chloroplast thylakoid membrane. Component of the cytochrome b6-f complex, which mediates electron transfer between photosystem II (PSII) and photosystem I (PSI), cyclic electron flow around PSI, and state transitions. The chain is Cytochrome b6 from Nicotiana tomentosiformis (Tobacco).